A 245-amino-acid chain; its full sequence is Probable transcriptional regulatory protein MAG6590 (245 aa).

It belongs to the TACO1 family.

It is found in the cytoplasm. The polypeptide is Probable transcriptional regulatory protein MAG6590 (Mycoplasmopsis agalactiae (strain NCTC 10123 / CIP 59.7 / PG2) (Mycoplasma agalactiae)).